Here is a 559-residue protein sequence, read N- to C-terminus: Probable alpha-(1-&gt;6)-mannopyranosyltransferase MSMEG_3120/MSMEI_3041 (559 aa).

A run of 12 helical transmembrane segments spans residues Phe-41–Val-61, Val-81–Gly-101, Ile-202–Trp-222, Leu-247–Leu-267, Trp-300–Ser-316, Leu-321–Gly-340, Ile-355–Phe-375, Trp-386–Leu-406, Ala-419–Gly-439, Val-455–Ala-475, Pro-480–Ala-500, and Leu-507–Leu-527. Residues Arg-535–Pro-548 are compositionally biased toward pro residues. A disordered region spans residues Arg-535–Pro-559.

It belongs to the MptA/B family.

The protein resides in the membrane. Its function is as follows. Catalyzes the addition of alpha-(1-&gt;6)-mannose residue. The protein is Probable alpha-(1-&gt;6)-mannopyranosyltransferase MSMEG_3120/MSMEI_3041 of Mycolicibacterium smegmatis (strain ATCC 700084 / mc(2)155) (Mycobacterium smegmatis).